Here is a 1530-residue protein sequence, read N- to C-terminus: B-cell CLL/lymphoma 9-like protein (1530 aa).

Disordered regions lie at residues 1 to 101 (MHSE…VLEP), 155 to 187 (QGHS…TDLH), 246 to 353 (HISS…PSVL), 398 to 439 (SGTG…IGGG), 473 to 503 (QTQN…LSSP), 821 to 1076 (QNGR…QNPL), 1250 to 1279 (KGMS…SEVI), and 1310 to 1331 (SETM…QVSS). The span at 8–18 (SNHGKQVTSGA) shows a compositional bias: polar residues. Positions 19–34 (QSQLPNVNQAQQQAPA) are enriched in low complexity. Residues 81–93 (ERSVSIDTGDQRE) show a composition bias toward basic and acidic residues. Low complexity predominate over residues 156–165 (GHSGSSTTGH). The span at 170–180 (GGPGLGSGHGP) shows a compositional bias: gly residues. Polar residues-rich tracts occupy residues 247–264 (ISSS…QSGT) and 278–287 (GTSTPSSTGH). Composition is skewed to low complexity over residues 409–426 (GPNG…NSND) and 485–503 (SLMG…LSSP). Composition is skewed to polar residues over residues 875–891 (LSST…TGSR), 920–930 (QLKSPSLSQEP), and 944–953 (SPSQLPQSGP). Low complexity-rich tracts occupy residues 960–971 (AASGAGTPSSTS), 979–994 (GPSL…PGHL), and 1031–1060 (SSST…INPS). Positions 1258-1268 (PHQPDSFPPMP) are enriched in pro residues.

The protein belongs to the BCL9 family.

It is found in the nucleus. Functionally, transcriptional regulator that may act as an activator. Plays a role for mesoderm patterning in early embryogenesis. This chain is B-cell CLL/lymphoma 9-like protein (bcl9l), found in Danio rerio (Zebrafish).